An 859-amino-acid polypeptide reads, in one-letter code: Ubiquitin carboxyl-terminal hydrolase 23 (859 aa).

Residues 1–24 (MEVATSSTEITIQTDRDPSSNNNG) show a composition bias toward polar residues. Residues 1 to 26 (MEVATSSTEITIQTDRDPSSNNNGSC) are disordered. Residues 107–410 (AGLQNLGNTC…KAYMLFYVRD (304 aa)) enclose the USP domain. The Nucleophile role is filled by Cys116. His369 serves as the catalytic Proton acceptor. Disordered regions lie at residues 722–749 (MISS…ASQN) and 822–859 (EESY…AYRI).

This sequence belongs to the peptidase C19 family.

The enzyme catalyses Thiol-dependent hydrolysis of ester, thioester, amide, peptide and isopeptide bonds formed by the C-terminal Gly of ubiquitin (a 76-residue protein attached to proteins as an intracellular targeting signal).. Its function is as follows. Recognizes and hydrolyzes the peptide bond at the C-terminal Gly of ubiquitin. Involved in the processing of poly-ubiquitin precursors as well as that of ubiquitinated proteins. This Arabidopsis thaliana (Mouse-ear cress) protein is Ubiquitin carboxyl-terminal hydrolase 23 (UBP23).